We begin with the raw amino-acid sequence, 632 residues long: Biosynthetic arginine decarboxylase (632 aa).

The residue at position 101 (Lys101) is an N6-(pyridoxal phosphate)lysine. 281 to 291 (FDVGGGLGVDY) is a substrate binding site.

The protein belongs to the Orn/Lys/Arg decarboxylase class-II family. SpeA subfamily. The cofactor is Mg(2+). Requires pyridoxal 5'-phosphate as cofactor.

The catalysed reaction is L-arginine + H(+) = agmatine + CO2. It participates in amine and polyamine biosynthesis; agmatine biosynthesis; agmatine from L-arginine: step 1/1. Functionally, catalyzes the biosynthesis of agmatine from arginine. This is Biosynthetic arginine decarboxylase from Salmonella agona (strain SL483).